A 756-amino-acid chain; its full sequence is Protein psiP (756 aa).

An N-terminal signal peptide occupies residues 1–23 (MFIQRTFLKVLTLLSIVTVLVHG). Residues 24–692 (QTQPKDKITL…NCNTGAVVST (669 aa)) lie on the Extracellular side of the membrane. N82 carries N-linked (GlcNAc...) asparagine glycosylation. The PA14 domain maps to 126–281 (LNWNGEAYEY…VDYCGVCEGD (156 aa)). N-linked (GlcNAc...) asparagine glycosylation is found at N359, N483, N564, and N663. The helical transmembrane segment at 693–713 (AVIAGSTVAGAVALGIFLYGG) threads the bilayer. Over 714-756 (KKGYDYWKDSRNISMGSSNSNPLYEEQQTGRGVNPMYDDPAAN) the chain is Cytoplasmic. Residues 730–744 (SSNSNPLYEEQQTGR) are compositionally biased toward polar residues. Positions 730 to 756 (SSNSNPLYEEQQTGRGVNPMYDDPAAN) are disordered.

It belongs to the prespore-cell-inducing factor family.

The protein resides in the membrane. The sequence is that of Protein psiP (psiP) from Dictyostelium discoideum (Social amoeba).